A 304-amino-acid polypeptide reads, in one-letter code: Non-specific ribonucleoside hydrolase RihC (304 aa).

The active site involves H233.

This sequence belongs to the IUNH family. RihC subfamily.

Functionally, hydrolyzes both purine and pyrimidine ribonucleosides with a broad-substrate specificity. In Escherichia coli O6:H1 (strain CFT073 / ATCC 700928 / UPEC), this protein is Non-specific ribonucleoside hydrolase RihC.